The primary structure comprises 193 residues: ATP-dependent Clp protease proteolytic subunit (193 aa).

Residue Ser98 is the Nucleophile of the active site. His123 is a catalytic residue.

This sequence belongs to the peptidase S14 family. Fourteen ClpP subunits assemble into 2 heptameric rings which stack back to back to give a disk-like structure with a central cavity, resembling the structure of eukaryotic proteasomes.

The protein localises to the cytoplasm. The catalysed reaction is Hydrolysis of proteins to small peptides in the presence of ATP and magnesium. alpha-casein is the usual test substrate. In the absence of ATP, only oligopeptides shorter than five residues are hydrolyzed (such as succinyl-Leu-Tyr-|-NHMec, and Leu-Tyr-Leu-|-Tyr-Trp, in which cleavage of the -Tyr-|-Leu- and -Tyr-|-Trp bonds also occurs).. Its function is as follows. Cleaves peptides in various proteins in a process that requires ATP hydrolysis. Has a chymotrypsin-like activity. Plays a major role in the degradation of misfolded proteins. The polypeptide is ATP-dependent Clp protease proteolytic subunit (Agathobacter rectalis (strain ATCC 33656 / DSM 3377 / JCM 17463 / KCTC 5835 / VPI 0990) (Eubacterium rectale)).